A 390-amino-acid polypeptide reads, in one-letter code: UPF0229 protein Cbei_0567 (390 aa).

The tract at residues 77–108 is disordered; it reads SGVGNEKRGEKLGNGNKKLAKGNQGAGNEEGD. Residues 89-103 are compositionally biased toward low complexity; sequence GNGNKKLAKGNQGAG.

Belongs to the UPF0229 family.

The protein is UPF0229 protein Cbei_0567 of Clostridium beijerinckii (strain ATCC 51743 / NCIMB 8052) (Clostridium acetobutylicum).